The sequence spans 861 residues: Ribosome biogenesis protein BOP1 homolog (861 aa).

Residues methionine 1–arginine 237 form a disordered region. Polar residues predominate over residues asparagine 29–serine 45. Acidic residues-rich tracts occupy residues aspartate 62 to aspartate 77 and serine 87 to alanine 143. 3 stretches are compositionally biased toward basic and acidic residues: residues glutamate 144 to lysine 156, glutamate 174 to alanine 190, and proline 212 to aspartate 223. WD repeat units follow at residues glycine 522–threonine 561, proline 563–serine 603, lysine 692–lysine 730, proline 733–glutamine 772, leucine 776–glutamine 815, and valine 831–threonine 861.

It belongs to the WD repeat BOP1/ERB1 family.

The protein localises to the nucleus. The protein resides in the nucleolus. It localises to the nucleoplasm. In terms of biological role, required for maturation of ribosomal RNAs and formation of the large ribosomal subunit. This chain is Ribosome biogenesis protein BOP1 homolog, found in Culex quinquefasciatus (Southern house mosquito).